We begin with the raw amino-acid sequence, 456 residues long: Serine--tRNA ligase (456 aa).

2 disordered regions span residues 107–130 (PHSSVPEGRSESDNREVRRWGTPP) and 229–253 (FLENQPVAATLPSNSNSPQGGQDDD). Positions 114-125 (GRSESDNREVRR) are enriched in basic and acidic residues. Residues 239–248 (LPSNSNSPQG) show a composition bias toward polar residues. 260 to 262 (TSE) is a binding site for L-serine. 291 to 293 (RSE) contacts ATP. Glu-314 lines the L-serine pocket. Residue 378 to 381 (EISS) participates in ATP binding. Ser-413 is a binding site for L-serine.

The protein belongs to the class-II aminoacyl-tRNA synthetase family. Type-1 seryl-tRNA synthetase subfamily. Homodimer. The tRNA molecule binds across the dimer.

It localises to the cytoplasm. The enzyme catalyses tRNA(Ser) + L-serine + ATP = L-seryl-tRNA(Ser) + AMP + diphosphate + H(+). It carries out the reaction tRNA(Sec) + L-serine + ATP = L-seryl-tRNA(Sec) + AMP + diphosphate + H(+). Its pathway is aminoacyl-tRNA biosynthesis; selenocysteinyl-tRNA(Sec) biosynthesis; L-seryl-tRNA(Sec) from L-serine and tRNA(Sec): step 1/1. Functionally, catalyzes the attachment of serine to tRNA(Ser). Is also able to aminoacylate tRNA(Sec) with serine, to form the misacylated tRNA L-seryl-tRNA(Sec), which will be further converted into selenocysteinyl-tRNA(Sec). The polypeptide is Serine--tRNA ligase (Nitrosospira multiformis (strain ATCC 25196 / NCIMB 11849 / C 71)).